Here is a 119-residue protein sequence, read N- to C-terminus: MKDSNKRFDYRVKRVRSKINGTHDKPRLSVYRGHKHIYAQIIDDSRGVTLASASTLSPELKGKLEINDTVEAAKSVGGLIAKKAVEKGVKKVVFDRRGYEYTGKIKALADTARESGLEF.

Belongs to the universal ribosomal protein uL18 family. As to quaternary structure, part of the 50S ribosomal subunit; part of the 5S rRNA/L5/L18/L25 subcomplex. Contacts the 5S and 23S rRNAs.

Functionally, this is one of the proteins that bind and probably mediate the attachment of the 5S RNA into the large ribosomal subunit, where it forms part of the central protuberance. This Endomicrobium trichonymphae protein is Large ribosomal subunit protein uL18.